Here is a 246-residue protein sequence, read N- to C-terminus: 5'-nucleotidase SurE (246 aa).

Positions 8, 9, 39, and 91 each coordinate a divalent metal cation.

It belongs to the SurE nucleotidase family. A divalent metal cation is required as a cofactor.

It localises to the cytoplasm. The enzyme catalyses a ribonucleoside 5'-phosphate + H2O = a ribonucleoside + phosphate. Functionally, nucleotidase that shows phosphatase activity on nucleoside 5'-monophosphates. This is 5'-nucleotidase SurE from Mannheimia succiniciproducens (strain KCTC 0769BP / MBEL55E).